An 85-amino-acid chain; its full sequence is Large ribosomal subunit protein bL27 (85 aa).

The interval 1 to 21 is disordered; the sequence is MAHKKGGGSTHNGRDSKPKML.

Belongs to the bacterial ribosomal protein bL27 family.

In Albidiferax ferrireducens (strain ATCC BAA-621 / DSM 15236 / T118) (Rhodoferax ferrireducens), this protein is Large ribosomal subunit protein bL27.